The primary structure comprises 161 residues: Large ribosomal subunit protein uL30m (161 aa).

The N-terminal 34 residues, 1–34, are a transit peptide targeting the mitochondrion; that stretch reads MAGILRLVVQWPPGRLQTVTKGVESLICTDWIRH.

Belongs to the universal ribosomal protein uL30 family. As to quaternary structure, component of the mitochondrial large ribosomal subunit (mt-LSU). Mature mammalian 55S mitochondrial ribosomes consist of a small (28S) and a large (39S) subunit. The 28S small subunit contains a 12S ribosomal RNA (12S mt-rRNA) and 30 different proteins. The 39S large subunit contains a 16S rRNA (16S mt-rRNA), a copy of mitochondrial valine transfer RNA (mt-tRNA(Val)), which plays an integral structural role, and 52 different proteins.

The protein localises to the mitochondrion. This Homo sapiens (Human) protein is Large ribosomal subunit protein uL30m (MRPL30).